The chain runs to 238 residues: Ribose-5-phosphate isomerase A (238 aa).

Residues 30-33, 87-90, and 100-103 each bind substrate; these read SGST, DGAD, and KGGG. The active-site Proton acceptor is E109. K127 serves as a coordination point for substrate.

It belongs to the ribose 5-phosphate isomerase family. As to quaternary structure, homodimer.

The catalysed reaction is aldehydo-D-ribose 5-phosphate = D-ribulose 5-phosphate. The protein operates within carbohydrate degradation; pentose phosphate pathway; D-ribose 5-phosphate from D-ribulose 5-phosphate (non-oxidative stage): step 1/1. Its function is as follows. Catalyzes the reversible conversion of ribose-5-phosphate to ribulose 5-phosphate. This chain is Ribose-5-phosphate isomerase A, found in Synechococcus sp. (strain WH7803).